We begin with the raw amino-acid sequence, 411 residues long: Snake venom metalloproteinase ACLF (411 aa).

The signal sequence occupies residues 1-20 (MIQVLLVTLCLAAFPYQGSS). The propeptide occupies 21 to 189 (IILESGNVND…KKAFQLNLTP (169 aa)). The 197-residue stretch at 197 to 393 (RYVELVIVAD…NNPQCILNKP (197 aa)) folds into the Peptidase M12B domain. Ca(2+) is bound by residues Glu-200 and Asp-284. Cystine bridges form between Cys-308/Cys-388, Cys-348/Cys-372, and Cys-350/Cys-355. His-333 is a Zn(2+) binding site. Residue Glu-334 is part of the active site. His-337 and His-343 together coordinate Zn(2+). Cys-388, Asn-391, Val-403, Asn-406, Leu-408, and Glu-410 together coordinate Ca(2+).

This sequence belongs to the venom metalloproteinase (M12B) family. P-I subfamily. As to quaternary structure, monomer. Zn(2+) serves as cofactor. In terms of tissue distribution, expressed by the venom gland.

It localises to the secreted. With respect to regulation, inhibited by EDTA and 1,10-phenanthroline, but not by PMSF. In terms of biological role, snake venom zinc metalloprotease that has fibrinolytic activity. The recombinant enzyme cleaves both alpha- and beta-chains of fibrinogen, but not the gamma-chain. The recombinant protein does not produce hemorrhage in mice. Cleaves the peptide substrate Abz-LVEALYQ-EDDnp at the Ala-Leu bond in vitro. The protein is Snake venom metalloproteinase ACLF (ACLPREF) of Agkistrodon contortrix laticinctus (Broad-banded copperhead).